Here is a 323-residue protein sequence, read N- to C-terminus: Probable proline iminopeptidase (323 aa).

Residues 37 to 301 (VVLHGGPGSR…VIVDEAGHDA (265 aa)) form the AB hydrolase-1 domain. S114 (nucleophile) is an active-site residue. Residue D271 is part of the active site. Catalysis depends on H299, which acts as the Proton donor.

This sequence belongs to the peptidase S33 family.

The protein localises to the cytoplasm. It carries out the reaction Release of N-terminal proline from a peptide.. Specifically catalyzes the removal of N-terminal proline residues from peptides. The polypeptide is Probable proline iminopeptidase (Streptomyces coelicolor (strain ATCC BAA-471 / A3(2) / M145)).